Reading from the N-terminus, the 313-residue chain is Pyrimidine-specific ribonucleoside hydrolase RihB (313 aa).

The active-site Proton acceptor is Asp-11. Positions 11, 16, and 124 each coordinate Ca(2+). Residues Gln-227 and His-239 each coordinate substrate. Asp-240 contributes to the Ca(2+) binding site.

Belongs to the IUNH family. RihB subfamily. In terms of assembly, homotetramer. The cofactor is Ca(2+).

The catalysed reaction is a pyrimidine ribonucleoside + H2O = a pyrimidine nucleobase + D-ribose. In terms of biological role, hydrolyzes cytidine or uridine to ribose and cytosine or uracil, respectively. Has a clear preference for cytidine over uridine. Strictly specific for ribonucleosides. This Escherichia coli O1:K1 / APEC protein is Pyrimidine-specific ribonucleoside hydrolase RihB.